Reading from the N-terminus, the 372-residue chain is Bifunctional enzyme IspD/IspF (372 aa).

Residues 1–211 are 2-C-methyl-D-erythritol 4-phosphate cytidylyltransferase; that stretch reads MLDISLIMLG…SALKAPENEL (211 aa). Residues 212 to 372 are 2-C-methyl-D-erythritol 2,4-cyclodiphosphate synthase; that stretch reads FVGSGFDVHE…SLKFYNWTQI (161 aa). A divalent metal cation is bound by residues Asp-218 and His-220. 4-CDP-2-C-methyl-D-erythritol 2-phosphate-binding positions include 218-220 and 244-245; these read DVH and HS. His-252 provides a ligand contact to a divalent metal cation. 4-CDP-2-C-methyl-D-erythritol 2-phosphate-binding positions include 266–268, 271–275, 342–345, Phe-349, and Arg-352; these read DIG, FPDTD, and TTTE.

In the N-terminal section; belongs to the IspD/TarI cytidylyltransferase family. IspD subfamily. This sequence in the C-terminal section; belongs to the IspF family. A divalent metal cation serves as cofactor.

It catalyses the reaction 2-C-methyl-D-erythritol 4-phosphate + CTP + H(+) = 4-CDP-2-C-methyl-D-erythritol + diphosphate. The enzyme catalyses 4-CDP-2-C-methyl-D-erythritol 2-phosphate = 2-C-methyl-D-erythritol 2,4-cyclic diphosphate + CMP. It participates in isoprenoid biosynthesis; isopentenyl diphosphate biosynthesis via DXP pathway; isopentenyl diphosphate from 1-deoxy-D-xylulose 5-phosphate: step 2/6. Its pathway is isoprenoid biosynthesis; isopentenyl diphosphate biosynthesis via DXP pathway; isopentenyl diphosphate from 1-deoxy-D-xylulose 5-phosphate: step 4/6. Its function is as follows. Bifunctional enzyme that catalyzes the formation of 4-diphosphocytidyl-2-C-methyl-D-erythritol from CTP and 2-C-methyl-D-erythritol 4-phosphate (MEP) (IspD), and catalyzes the conversion of 4-diphosphocytidyl-2-C-methyl-D-erythritol 2-phosphate (CDP-ME2P) to 2-C-methyl-D-erythritol 2,4-cyclodiphosphate (ME-CPP) with a corresponding release of cytidine 5-monophosphate (CMP) (IspF). The chain is Bifunctional enzyme IspD/IspF from Campylobacter concisus (strain 13826).